The primary structure comprises 249 residues: Aspartate/glutamate leucyltransferase (249 aa).

This sequence belongs to the R-transferase family. Bpt subfamily.

It is found in the cytoplasm. The enzyme catalyses N-terminal L-glutamyl-[protein] + L-leucyl-tRNA(Leu) = N-terminal L-leucyl-L-glutamyl-[protein] + tRNA(Leu) + H(+). It catalyses the reaction N-terminal L-aspartyl-[protein] + L-leucyl-tRNA(Leu) = N-terminal L-leucyl-L-aspartyl-[protein] + tRNA(Leu) + H(+). Functionally, functions in the N-end rule pathway of protein degradation where it conjugates Leu from its aminoacyl-tRNA to the N-termini of proteins containing an N-terminal aspartate or glutamate. The protein is Aspartate/glutamate leucyltransferase of Brucella abortus (strain 2308).